We begin with the raw amino-acid sequence, 139 residues long: D-ribose pyranase (139 aa).

Catalysis depends on His-20, which acts as the Proton donor. Substrate contacts are provided by residues Asp-28, His-106, and 128 to 130; that span reads YAN.

The protein belongs to the RbsD / FucU family. RbsD subfamily. In terms of assembly, homodecamer.

Its subcellular location is the cytoplasm. It catalyses the reaction beta-D-ribopyranose = beta-D-ribofuranose. The protein operates within carbohydrate metabolism; D-ribose degradation; D-ribose 5-phosphate from beta-D-ribopyranose: step 1/2. Its function is as follows. Catalyzes the interconversion of beta-pyran and beta-furan forms of D-ribose. The sequence is that of D-ribose pyranase from Vibrio campbellii (strain ATCC BAA-1116).